Consider the following 303-residue polypeptide: Probable 5-dehydro-4-deoxyglucarate dehydratase (303 aa).

It belongs to the DapA family.

The enzyme catalyses 5-dehydro-4-deoxy-D-glucarate + H(+) = 2,5-dioxopentanoate + CO2 + H2O. It functions in the pathway carbohydrate acid metabolism; D-glucarate degradation; 2,5-dioxopentanoate from D-glucarate: step 2/2. This chain is Probable 5-dehydro-4-deoxyglucarate dehydratase, found in Acidovorax ebreus (strain TPSY) (Diaphorobacter sp. (strain TPSY)).